We begin with the raw amino-acid sequence, 658 residues long: Exoribonuclease 2 (658 aa).

The RNB domain maps to 189 to 530 (REDLTSLYFT…VNHRLIKQVL (342 aa)). Residues 576-658 (AVEFDCEIAD…ETRSIVGNII (83 aa)) enclose the S1 motif domain.

The protein belongs to the RNR ribonuclease family. RNase II subfamily.

It is found in the cytoplasm. The enzyme catalyses Exonucleolytic cleavage in the 3'- to 5'-direction to yield nucleoside 5'-phosphates.. In terms of biological role, involved in mRNA degradation. Hydrolyzes single-stranded polyribonucleotides processively in the 3' to 5' direction. The protein is Exoribonuclease 2 of Actinobacillus pleuropneumoniae serotype 7 (strain AP76).